The following is a 57-amino-acid chain: Small ribosomal subunit protein bS21 (57 aa).

Positions 35-57 (REHYEKPSVKRKKKAEAARKKKF) are disordered. Basic residues predominate over residues 43 to 57 (VKRKKKAEAARKKKF).

Belongs to the bacterial ribosomal protein bS21 family.

The sequence is that of Small ribosomal subunit protein bS21 from Alkaliphilus metalliredigens (strain QYMF).